Reading from the N-terminus, the 918-residue chain is Probable lipoxygenase 6 (918 aa).

The interval 56–76 (AASPSSGIKGGGAGERRPAPE) is disordered. Residues 90–218 (QKEDIKEAVA…ELPTKRVFFS (129 aa)) form the PLAT domain. The Lipoxygenase domain maps to 221–918 (PYLPSETPPG…CRGVPNSISI (698 aa)). Positions 573, 578, 765, 769, and 918 each coordinate Fe cation.

The protein belongs to the lipoxygenase family. Fe cation is required as a cofactor.

It carries out the reaction (9Z,12Z)-octadecadienoate + O2 = (13S)-hydroperoxy-(9Z,11E)-octadecadienoate. The enzyme catalyses (9Z,12Z,15Z)-octadecatrienoate + O2 = (13S)-hydroperoxy-(9Z,11E,15Z)-octadecatrienoate. Its pathway is lipid metabolism; oxylipin biosynthesis. In terms of biological role, plant lipoxygenase may be involved in a number of diverse aspects of plant physiology including growth and development, pest resistance, and senescence or responses to wounding. Catalyzes the hydroperoxidation of lipids containing a cis,cis-1,4-pentadiene structure. The sequence is that of Probable lipoxygenase 6 from Oryza sativa subsp. japonica (Rice).